Here is an 892-residue protein sequence, read N- to C-terminus: Protein argonaute 11 (892 aa).

Over residues 1-17 the composition is skewed to gly residues; it reads MSSRGGGVGGRRGGPGG. Disordered stretches follow at residues 1 to 68 and 86 to 117; these read MSSR…ALQP and MEAR…GALP. The span at 86 to 107 shows a compositional bias: low complexity; it reads MEAREGASSSSSASAPAVGEVE. Residues 248–362 form the PAZ domain; the sequence is SLKQFLAGTY…LPMEVCRIVK (115 aa). The 308-residue stretch at 541-848 folds into the Piwi domain; sequence LLVIVLPDAN…AASRARHYLE (308 aa). A disordered region spans residues 850–876; the sequence is GSLPDHGSSSASAAGGSRRNDRGVPVK. The segment covering 856–866 has biased composition (low complexity); that stretch reads GSSSASAAGGS. Residues 867–876 show a composition bias toward basic and acidic residues; sequence RRNDRGVPVK.

This sequence belongs to the argonaute family. Ago subfamily.

Functionally, probably involved in the RNA silencing pathway. May bind to short RNAs such as microRNAs (miRNAs) or short interfering RNAs (siRNAs), and represses the translation of mRNAs which are complementary to them. In Oryza sativa subsp. japonica (Rice), this protein is Protein argonaute 11 (AGO11).